Reading from the N-terminus, the 126-residue chain is Follitropin subunit beta (126 aa).

An N-terminal signal peptide occupies residues M1–Q19. Disulfide bonds link C21/C69, C35/C84, C38/C122, C46/C100, C50/C102, and C105/C112. Residues N25 and N42 are each glycosylated (N-linked (GlcNAc...) asparagine).

The protein belongs to the glycoprotein hormones subunit beta family. Heterodimer. The active follitropin is a heterodimer composed of an alpha chain/CGA shared with other hormones and a unique beta chain/FSHB shown here.

The protein localises to the secreted. In terms of biological role, together with the alpha chain CGA constitutes follitropin, the follicle-stimulating hormone, and provides its biological specificity to the hormone heterodimer. Binds FSHR, a G protein-coupled receptor, on target cells to activate downstream signaling pathways. Follitropin is involved in follicle development and spermatogenesis in reproductive organs. The protein is Follitropin subunit beta (FSHB) of Phodopus sungorus (Striped hairy-footed hamster).